The following is a 464-amino-acid chain: tRNA-2-methylthio-N(6)-dimethylallyladenosine synthase (464 aa).

In terms of domain architecture, MTTase N-terminal spans 4-119 (RTFHIMTFGC…APQAIERLVQ (116 aa)). Residues C13, C48, C82, C158, C162, and C165 each contribute to the [4Fe-4S] cluster site. The Radical SAM core domain maps to 144–375 (GEVPVSAYVN…QEVQNEYSEA (232 aa)). A TRAM domain is found at 378-461 (QAMVGKTVMV…KHSLTGEPAG (84 aa)). Positions 393-420 (SPKSAAGSGTDAQNAAEESGRTASSWQG) are disordered.

Belongs to the methylthiotransferase family. MiaB subfamily. Monomer. [4Fe-4S] cluster serves as cofactor.

It is found in the cytoplasm. The catalysed reaction is N(6)-dimethylallyladenosine(37) in tRNA + (sulfur carrier)-SH + AH2 + 2 S-adenosyl-L-methionine = 2-methylsulfanyl-N(6)-dimethylallyladenosine(37) in tRNA + (sulfur carrier)-H + 5'-deoxyadenosine + L-methionine + A + S-adenosyl-L-homocysteine + 2 H(+). Its function is as follows. Catalyzes the methylthiolation of N6-(dimethylallyl)adenosine (i(6)A), leading to the formation of 2-methylthio-N6-(dimethylallyl)adenosine (ms(2)i(6)A) at position 37 in tRNAs that read codons beginning with uridine. The sequence is that of tRNA-2-methylthio-N(6)-dimethylallyladenosine synthase from Oleidesulfovibrio alaskensis (strain ATCC BAA-1058 / DSM 17464 / G20) (Desulfovibrio alaskensis).